The primary structure comprises 446 residues: uncharacterized protein (446 aa).

The next 4 helical transmembrane spans lie at 69-89, 98-118, 169-189, and 247-267; these read FWLW…VTYL, FFLV…VWLA, HSLW…LLLV, and GLLV…AWVV.

It is found in the membrane. This is an uncharacterized protein from Neisseria meningitidis serogroup B (strain ATCC BAA-335 / MC58).